Reading from the N-terminus, the 372-residue chain is Transaldolase 2 (372 aa).

Lysine 140 acts as the Schiff-base intermediate with substrate in catalysis.

The protein belongs to the transaldolase family. Type 2 subfamily.

The protein localises to the cytoplasm. It catalyses the reaction D-sedoheptulose 7-phosphate + D-glyceraldehyde 3-phosphate = D-erythrose 4-phosphate + beta-D-fructose 6-phosphate. It participates in carbohydrate degradation; pentose phosphate pathway; D-glyceraldehyde 3-phosphate and beta-D-fructose 6-phosphate from D-ribose 5-phosphate and D-xylulose 5-phosphate (non-oxidative stage): step 2/3. Transaldolase is important for the balance of metabolites in the pentose-phosphate pathway. This Streptomyces avermitilis (strain ATCC 31267 / DSM 46492 / JCM 5070 / NBRC 14893 / NCIMB 12804 / NRRL 8165 / MA-4680) protein is Transaldolase 2.